The chain runs to 280 residues: UPF0276 protein NMB2142 (280 aa).

It belongs to the UPF0276 family.

This is UPF0276 protein NMB2142 from Neisseria meningitidis serogroup B (strain ATCC BAA-335 / MC58).